The following is a 532-amino-acid chain: Berberine bridge enzyme-like 23 (532 aa).

The signal sequence occupies residues Met-1–Ser-22. The cysteines at positions 36 and 102 are disulfide-linked. Asn-78 is a glycosylation site (N-linked (GlcNAc...) asparagine). An FAD-binding PCMH-type domain is found at Thr-80–Val-256. A cross-link (6-(S-cysteinyl)-8alpha-(pros-histidyl)-FAD (His-Cys)) is located at residues His-117 to Cys-180. N-linked (GlcNAc...) asparagine glycosylation is found at Asn-272 and Asn-487.

It belongs to the oxygen-dependent FAD-linked oxidoreductase family. FAD serves as cofactor. Post-translationally, the FAD cofactor is bound via a bicovalent 6-S-cysteinyl, 8alpha-N1-histidyl FAD linkage. Accumulates in cell walls of etiolated hypocotyls.

It is found in the secreted. It localises to the cell wall. The polypeptide is Berberine bridge enzyme-like 23 (Arabidopsis thaliana (Mouse-ear cress)).